We begin with the raw amino-acid sequence, 1231 residues long: Complement factor H (1231 aa).

The signal sequence occupies residues 1-18 (MRLLAKIICLMLWAICVA). Sushi domains are found at residues 19–82 (EDCN…KCQK), 83–143 (RPCG…ICEV), 144–207 (VKCL…KCVE), 208–264 (ISCK…SCEE), 265–322 (KSCD…RCTL), 324–386 (PCDY…VPCL), 387–444 (RKCY…RCIR), 446–507 (KTCS…TCIK), 515–566 (MNAR…ICYE), 567–625 (RECE…ICKE), 628–686 (QSCG…VCIV), 689–746 (STCG…QCVA), 751–805 (KKCK…NCSM), 809–866 (QLCP…LCVE), 868–928 (IPCS…QCEG), 929–986 (LPCK…SCIK), 987–1045 (TDCL…TCRD), 1046–1104 (TSCV…QCKD), 1107–1165 (GKCG…KCLH), and 1170–1230 (SREI…TCAK). Disulfide bonds link cysteine 21-cysteine 66, cysteine 52-cysteine 80, cysteine 85-cysteine 129, cysteine 114-cysteine 141, cysteine 146-cysteine 192, cysteine 178-cysteine 205, cysteine 210-cysteine 251, cysteine 237-cysteine 262, cysteine 267-cysteine 309, cysteine 294-cysteine 320, cysteine 325-cysteine 374, cysteine 357-cysteine 385, cysteine 389-cysteine 431, cysteine 416-cysteine 442, cysteine 448-cysteine 494, cysteine 477-cysteine 505, cysteine 509-cysteine 553, cysteine 536-cysteine 564, cysteine 569-cysteine 611, cysteine 597-cysteine 623, cysteine 630-cysteine 673, cysteine 659-cysteine 684, cysteine 691-cysteine 733, cysteine 719-cysteine 744, cysteine 753-cysteine 792, cysteine 781-cysteine 803, cysteine 811-cysteine 853, cysteine 839-cysteine 864, cysteine 870-cysteine 915, cysteine 901-cysteine 926, cysteine 931-cysteine 973, cysteine 959-cysteine 984, cysteine 989-cysteine 1032, cysteine 1018-cysteine 1043, cysteine 1048-cysteine 1091, cysteine 1077-cysteine 1102, cysteine 1109-cysteine 1152, cysteine 1138-cysteine 1163, cysteine 1167-cysteine 1218, and cysteine 1201-cysteine 1228. Asparagine 217 carries N-linked (GlcNAc...) (complex) asparagine glycosylation. A glycan (N-linked (GlcNAc...) asparagine) is linked at asparagine 529. An N-linked (GlcNAc...) asparagine glycan is attached at asparagine 718. Residues asparagine 802 and asparagine 822 are each glycosylated (N-linked (GlcNAc...) asparagine). N-linked (GlcNAc...) (complex) asparagine glycosylation is found at asparagine 882 and asparagine 911. N-linked (GlcNAc...) (complex) asparagine glycosylation is present at asparagine 1029. Asparagine 1095 carries N-linked (GlcNAc...) asparagine glycosylation.

As to quaternary structure, homodimer. Also forms homooligomers. Interacts with complement protein C3b; this interaction inhibits complement activation. Interacts with complement protein C3d. Interacts with CR3/ITGAM; this interaction mediates adhesion of neutrophils to pathogens leading to pathogen clearance. Interacts with complement factor I. In terms of assembly, (Microbial infection) Interacts with West nile virus non-structural protein 1 (NS1); this interaction leads to the degradation of C3. (Microbial infection) Interacts with C.albicans GPD2; the interaction is direct and leads to the degradation of C3 which enables the pathogen to evade the host innate immune system. As to quaternary structure, (Microbial infection) Interacts with Neisseria meningitidis protein fHbp. In terms of assembly, (Microbial infection) Interacts with Borrelia burgdorferi outer surface protein E/OspE; this interaction recruits complement regulator factor H onto the bacterial surface to evade complement-mediated cell lysis. (Microbial infection) Interacts with Streptococcus pneumoniae protein virulence factor choline-binding protein A/CbpAN; this interaction enables Streptococcus pneumoniae to evade surveillance by human complement system. As to quaternary structure, (Microbial infection) Interacts with Staphylococcus aureus surface protein serine-aspartate repeat protein E/SdrE; this interaction sequesters CFH on the surface of S.aureus for complement evasion. In terms of assembly, (Microbial infection) Interacts with Staphylococcus aureus protein Sbi; this interaction inhibits the complement activation of the alternative pathway. (Microbial infection) Interacts (via sushi 4-6 domains) with P.falciparum surface protein PF92; the interaction recruits CFH onto the merozoite surface preventing complement-mediated cell lysis. The interaction does not affect CFH activity. Interacts (via sushi 6-7 domains) with P.falciparum (strain NF54) GAP50; the interaction occurs in the vector mosquito midgut at the surface of the activated parasite gametocytes; the interaction protects the parasite from alternative complement pathway-mediated elimination. As to quaternary structure, (Microbial infection) Interacts (via sushi 4-6 domains) with P.falciparum surface protein PF92; the interaction recruits FHL-1 isoform onto the merozoite surface preventing complement-mediated cell lysis. The interaction does not affect FHL-1 isoform activity. Interacts (via sushi 6-7 domains) with P.falciparum (strain NF54) GAP50; the interaction occurs in the vector mosquito midgut at the surface of the activated parasite gametocytes; the interaction protects the parasite from alternative complement pathway-mediated elimination. In terms of processing, sulfated on tyrosine residues. Post-translationally, according to a report, Asn-217 is not glycosylated. Another study observed glycosylation at this position. In terms of tissue distribution, expressed in the retinal pigment epithelium (at protein level). CFH is one of the most abundant complement components in blood where the liver is the major source of CFH protein in vivo. in addition, CFH is secreted by additional cell types including monocytes, fibroblasts, or endothelial cells.

It localises to the secreted. In terms of biological role, glycoprotein that plays an essential role in maintaining a well-balanced immune response by modulating complement activation. Acts as a soluble inhibitor of complement, where its binding to self markers such as glycan structures prevents complement activation and amplification on cell surfaces. Accelerates the decay of the complement alternative pathway (AP) C3 convertase C3bBb, thus preventing local formation of more C3b, the central player of the complement amplification loop. As a cofactor of the serine protease factor I, CFH also regulates proteolytic degradation of already-deposited C3b. In addition, mediates several cellular responses through interaction with specific receptors. For example, interacts with CR3/ITGAM receptor and thereby mediates the adhesion of human neutrophils to different pathogens. In turn, these pathogens are phagocytosed and destroyed. Functionally, (Microbial infection) In the mosquito midgut, binds to the surface of parasite P.falciparum gametocytes and protects the parasite from alternative complement pathway-mediated elimination. The sequence is that of Complement factor H (CFH) from Homo sapiens (Human).